The chain runs to 254 residues: 5-oxoprolinase subunit A (254 aa).

The protein belongs to the LamB/PxpA family. In terms of assembly, forms a complex composed of PxpA, PxpB and PxpC.

The enzyme catalyses 5-oxo-L-proline + ATP + 2 H2O = L-glutamate + ADP + phosphate + H(+). Its function is as follows. Catalyzes the cleavage of 5-oxoproline to form L-glutamate coupled to the hydrolysis of ATP to ADP and inorganic phosphate. This Rhodopseudomonas palustris (strain ATCC BAA-98 / CGA009) protein is 5-oxoprolinase subunit A.